A 507-amino-acid chain; its full sequence is AMSH-like ubiquitin thioesterase 3 (507 aa).

Residues 73–107 (QERLGSRKRLRAVINELESLKPEFNQLVDKLNRVE) are a coiled coil. Disordered regions lie at residues 133-162 (HKAS…LTSS) and 214-242 (PSNT…LNGD). Polar residues-rich tracts occupy residues 146–162 (LPTS…LTSS), 214–224 (PSNTDWGSADN), and 232–242 (PSSSSASLNGD). In terms of domain architecture, MPN spans 333-463 (LHVPVRIMDD…IFHLSDPSGV (131 aa)). Positions 411, 413, 424, 426, 469, 475, and 477 each coordinate Zn(2+). A JAMM motif motif is present at residues 411–424 (HTHPTQTCFMSSVD).

It belongs to the peptidase M67C family. As to quaternary structure, interacts with PATL1 and PATL2. May also bind to HSC70-1, HSC70-3, VHA-A, BGLU23 and EPSIN1. Interacts with BRO1/ALIX. Zn(2+) is required as a cofactor.

It localises to the membrane. Its subcellular location is the cytoplasm. The protein resides in the vacuole membrane. The protein localises to the late endosome. Its function is as follows. Zinc metalloprotease that cleaves 'Lys-48'- and 'Lys-63'-linked polyubiquitin chains, but is not implicated in protein degradation by the 26S proteasome, deneddylation, or desumoylation. Required for intracellular trafficking (e.g. trafficking from the Golgi to the vacuole and the vacuolar trafficking of endocytosed cargo), endocytosis and vacuole biogenesis. This Arabidopsis thaliana (Mouse-ear cress) protein is AMSH-like ubiquitin thioesterase 3 (AMSH3).